The following is an 82-amino-acid chain: UPF0180 protein BALH_1248 (82 aa).

This sequence belongs to the UPF0180 family.

The polypeptide is UPF0180 protein BALH_1248 (Bacillus thuringiensis (strain Al Hakam)).